Reading from the N-terminus, the 148-residue chain is Nucleoside diphosphate kinase (148 aa).

ATP contacts are provided by K10, F58, R86, T92, R103, and N113. The active-site Pros-phosphohistidine intermediate is H116.

This sequence belongs to the NDK family. The cofactor is Mg(2+).

Its subcellular location is the cytoplasm. It carries out the reaction a 2'-deoxyribonucleoside 5'-diphosphate + ATP = a 2'-deoxyribonucleoside 5'-triphosphate + ADP. The catalysed reaction is a ribonucleoside 5'-diphosphate + ATP = a ribonucleoside 5'-triphosphate + ADP. In terms of biological role, major role in the synthesis of nucleoside triphosphates other than ATP. The ATP gamma phosphate is transferred to the NDP beta phosphate via a ping-pong mechanism, using a phosphorylated active-site intermediate. The polypeptide is Nucleoside diphosphate kinase (Thermoplasma acidophilum (strain ATCC 25905 / DSM 1728 / JCM 9062 / NBRC 15155 / AMRC-C165)).